Reading from the N-terminus, the 156-residue chain is Small ribosomal subunit protein uS7 (156 aa).

This sequence belongs to the universal ribosomal protein uS7 family. In terms of assembly, part of the 30S ribosomal subunit. Contacts proteins S9 and S11.

Functionally, one of the primary rRNA binding proteins, it binds directly to 16S rRNA where it nucleates assembly of the head domain of the 30S subunit. Is located at the subunit interface close to the decoding center, probably blocks exit of the E-site tRNA. The polypeptide is Small ribosomal subunit protein uS7 (Rhizobium johnstonii (strain DSM 114642 / LMG 32736 / 3841) (Rhizobium leguminosarum bv. viciae)).